The following is a 99-amino-acid chain: Small ribosomal subunit protein uS14c (99 aa).

It belongs to the universal ribosomal protein uS14 family. In terms of assembly, part of the 30S ribosomal subunit.

The protein resides in the plastid. Its subcellular location is the chloroplast. In terms of biological role, binds 16S rRNA, required for the assembly of 30S particles. This Welwitschia mirabilis (Tree tumbo) protein is Small ribosomal subunit protein uS14c.